The sequence spans 272 residues: 3-methyl-2-oxobutanoate hydroxymethyltransferase (272 aa).

2 residues coordinate Mg(2+): Asp-43 and Asp-82. Residues 43–44 (DS), Asp-82, and Lys-112 each bind 3-methyl-2-oxobutanoate. Glu-114 is a binding site for Mg(2+). Catalysis depends on Glu-179, which acts as the Proton acceptor.

Belongs to the PanB family. In terms of assembly, homodecamer; pentamer of dimers. It depends on Mg(2+) as a cofactor.

Its subcellular location is the cytoplasm. It carries out the reaction 3-methyl-2-oxobutanoate + (6R)-5,10-methylene-5,6,7,8-tetrahydrofolate + H2O = 2-dehydropantoate + (6S)-5,6,7,8-tetrahydrofolate. It participates in cofactor biosynthesis; (R)-pantothenate biosynthesis; (R)-pantoate from 3-methyl-2-oxobutanoate: step 1/2. Catalyzes the reversible reaction in which hydroxymethyl group from 5,10-methylenetetrahydrofolate is transferred onto alpha-ketoisovalerate to form ketopantoate. This Staphylococcus aureus (strain Mu3 / ATCC 700698) protein is 3-methyl-2-oxobutanoate hydroxymethyltransferase.